The chain runs to 32 residues: Photosystem II reaction center protein T (32 aa).

A helical transmembrane segment spans residues 3 to 23; it reads AITYTFILFLTLGLLFFAVAF.

Belongs to the PsbT family. PSII is composed of 1 copy each of membrane proteins PsbA, PsbB, PsbC, PsbD, PsbE, PsbF, PsbH, PsbI, PsbJ, PsbK, PsbL, PsbM, PsbT, PsbX, PsbY, PsbZ, Psb30/Ycf12, peripheral proteins PsbO, CyanoQ (PsbQ), PsbU, PsbV and a large number of cofactors. It forms dimeric complexes.

It is found in the cellular thylakoid membrane. Functionally, found at the monomer-monomer interface of the photosystem II (PS II) dimer, plays a role in assembly and dimerization of PSII. PSII is a light-driven water plastoquinone oxidoreductase, using light energy to abstract electrons from H(2)O, generating a proton gradient subsequently used for ATP formation. This is Photosystem II reaction center protein T from Synechococcus sp. (strain JA-2-3B'a(2-13)) (Cyanobacteria bacterium Yellowstone B-Prime).